The chain runs to 92 residues: Small ribosomal subunit protein uS19c (92 aa).

Belongs to the universal ribosomal protein uS19 family.

It localises to the plastid. Its subcellular location is the chloroplast. Its function is as follows. Protein S19 forms a complex with S13 that binds strongly to the 16S ribosomal RNA. The chain is Small ribosomal subunit protein uS19c from Pyropia yezoensis (Susabi-nori).